Reading from the N-terminus, the 149-residue chain is Arginine repressor (149 aa).

This sequence belongs to the ArgR family.

The protein resides in the cytoplasm. The protein operates within amino-acid biosynthesis; L-arginine biosynthesis [regulation]. Its function is as follows. Regulates arginine biosynthesis genes. In Listeria welshimeri serovar 6b (strain ATCC 35897 / DSM 20650 / CCUG 15529 / CIP 8149 / NCTC 11857 / SLCC 5334 / V8), this protein is Arginine repressor.